We begin with the raw amino-acid sequence, 358 residues long: Peptide chain release factor 1 (358 aa).

Position 233 is an N5-methylglutamine (Q233).

Belongs to the prokaryotic/mitochondrial release factor family. Post-translationally, methylated by PrmC. Methylation increases the termination efficiency of RF1.

The protein resides in the cytoplasm. Its function is as follows. Peptide chain release factor 1 directs the termination of translation in response to the peptide chain termination codons UAG and UAA. The polypeptide is Peptide chain release factor 1 (Blochmanniella floridana).